Here is a 51-residue protein sequence, read N- to C-terminus: UPF0320 protein YOL166W-A (51 aa).

This sequence belongs to the UPF0320 family.

The protein is UPF0320 protein YOL166W-A of Saccharomyces cerevisiae (strain ATCC 204508 / S288c) (Baker's yeast).